The following is a 162-amino-acid chain: Ribosomal RNA large subunit methyltransferase H (162 aa).

Residues Leu78, Gly109, and Leu128–Leu133 contribute to the S-adenosyl-L-methionine site.

Belongs to the RNA methyltransferase RlmH family. In terms of assembly, homodimer.

Its subcellular location is the cytoplasm. The enzyme catalyses pseudouridine(1915) in 23S rRNA + S-adenosyl-L-methionine = N(3)-methylpseudouridine(1915) in 23S rRNA + S-adenosyl-L-homocysteine + H(+). Its function is as follows. Specifically methylates the pseudouridine at position 1915 (m3Psi1915) in 23S rRNA. The chain is Ribosomal RNA large subunit methyltransferase H from Psychrobacter arcticus (strain DSM 17307 / VKM B-2377 / 273-4).